Here is a 334-residue protein sequence, read N- to C-terminus: MEVQRVQEIASLSKVIDTIPAEYIRSENEQPVISTVHGVVLEVPVIDLSDSDEKKIVGLVSEASKEWGIFQVVNHGIPNEVIRKLQEVGKHFFELPQEEKELIAKPEGSQSIEGYGTRLQKEVDGKKGWVDHLFHKIWPPSAINYQFWPKNPPAYREANEEYAKRLQLVVDNLFKYLSLGLDLEPNSFKDGAGGDDLVYLMKINYYPPCPRPDLALGVAHTDMSAITVLVPNEVPGLQVYKDGHWYDCKYIPNALIVHIGDQVEIMSNGKYKSVYHRTTVNKEKTRMSWPVFLEPPPDHEVGPIPKLVNEENPAKFKTKKYKDYAYCKLNKLPQ.

The Fe2OG dioxygenase domain maps to 196–295 (DLVYLMKINY…RMSWPVFLEP (100 aa)). Fe cation is bound by residues His220, Asp222, and His276.

It belongs to the iron/ascorbate-dependent oxidoreductase family. The cofactor is Fe cation. L-ascorbate serves as cofactor.

Its subcellular location is the cytoplasm. The catalysed reaction is a (2R,3R)-dihydroflavonol + 2-oxoglutarate + O2 = a flavonol + succinate + CO2 + H2O. It catalyses the reaction a (2S)-flavan-4-one + 2-oxoglutarate + O2 = a (2R,3R)-dihydroflavonol + succinate + CO2. It participates in secondary metabolite biosynthesis; flavonoid biosynthesis. Functionally, catalyzes the formation of flavonols from dihydroflavonols. It can act on dihydrokaempferol to produce kaempferol, on dihydroquercetin to produce quercitin and on dihydromyricetin to produce myricetin. The chain is Flavonol synthase/flavanone 3-hydroxylase (FLS) from Eustoma exaltatum subsp. russellianum (Bluebells).